We begin with the raw amino-acid sequence, 286 residues long: Nucleotide-binding protein Tgr7_0722 (286 aa).

8 to 15 (GLSGSGKS) lines the ATP pocket. 60-63 (DVRS) provides a ligand contact to GTP.

This sequence belongs to the RapZ-like family.

Its function is as follows. Displays ATPase and GTPase activities. In Thioalkalivibrio sulfidiphilus (strain HL-EbGR7), this protein is Nucleotide-binding protein Tgr7_0722.